Reading from the N-terminus, the 163-residue chain is Glyoxalase domain-containing protein 5 (163 aa).

The VOC domain maps to 41–161 (HLDHLVLTVR…DDNLIEVSNY (121 aa)).

This sequence belongs to the glyoxalase I family.

This Danio rerio (Zebrafish) protein is Glyoxalase domain-containing protein 5 (glod5).